Consider the following 236-residue polypeptide: Orotidine 5'-phosphate decarboxylase (236 aa).

Residues Asp16, Lys38, 65-74 (DLKLHDIGNT), Thr123, Arg184, Gln193, Gly213, and Arg214 contribute to the substrate site. Lys67 functions as the Proton donor in the catalytic mechanism.

The protein belongs to the OMP decarboxylase family. Type 1 subfamily. Homodimer.

The enzyme catalyses orotidine 5'-phosphate + H(+) = UMP + CO2. It functions in the pathway pyrimidine metabolism; UMP biosynthesis via de novo pathway; UMP from orotate: step 2/2. Catalyzes the decarboxylation of orotidine 5'-monophosphate (OMP) to uridine 5'-monophosphate (UMP). This is Orotidine 5'-phosphate decarboxylase from Methylobacterium nodulans (strain LMG 21967 / CNCM I-2342 / ORS 2060).